A 328-amino-acid polypeptide reads, in one-letter code: Basic leucine zipper (bZIP) transcription factor atfB (328 aa).

The interval 1–39 (MLPEQSAFGRSAMPGSDAVNPGPSPFAPPPNSFSGDFLG) is disordered. Positions 22 to 31 (GPSPFAPPPN) are enriched in pro residues. Residues 163 to 202 (KAKREKFLERNRLAASKCRQKKKEHTQLLESRYREQSDKK) are basic motif. Residues 163–226 (KAKREKFLER…LGLKNEVLKH (64 aa)) form the bZIP domain. The segment at 205 to 219 (LVSEIARLRSEILGL) is leucine-zipper. The disordered stretch occupies residues 250–313 (TTAPDLTDVP…SEASVLTENS (64 aa)). Polar residues predominate over residues 262-277 (ASSSEGPMTPRPQQAL). Residues 283-305 (DPLHLEPSRADGSTDHSVRRDSE) are compositionally biased toward basic and acidic residues.

Belongs to the bZIP family. ATF subfamily.

Its subcellular location is the nucleus. In terms of biological role, transcription factor that acts as a key player in the regulatory circuit that integrates secondary metabolism and cellular response to oxidative stress. Regulates the genes involved in development, as well as osmotic, oxidative, and cell wall stresses. Participates in the caspofungin paradoxical effect (CPE), where fungi grow beyond the minimum inhibitory concentration of caspofungin. Plays a role in virulence. The protein is Basic leucine zipper (bZIP) transcription factor atfB of Aspergillus fumigatus (strain ATCC MYA-4609 / CBS 101355 / FGSC A1100 / Af293) (Neosartorya fumigata).